Here is a 307-residue protein sequence, read N- to C-terminus: Malate dehydrogenase (307 aa).

Residues 8–13 and Asp-32 each bind NAD(+); that span reads GAGNVG. Positions 81 and 87 each coordinate substrate. NAD(+) contacts are provided by residues Asn-94 and 117 to 119; that span reads VSN. Substrate contacts are provided by Asn-119 and Arg-150. His-174 acts as the Proton acceptor in catalysis.

This sequence belongs to the LDH/MDH superfamily. MDH type 3 family.

The catalysed reaction is (S)-malate + NAD(+) = oxaloacetate + NADH + H(+). In terms of biological role, catalyzes the reversible oxidation of malate to oxaloacetate. This is Malate dehydrogenase from Dehalococcoides mccartyi (strain CBDB1).